A 147-amino-acid polypeptide reads, in one-letter code: Hemoglobin subunit gamma-2 (147 aa).

The 145-residue stretch at 3–147 (HFTEEDKATI…VASALSSRYH (145 aa)) folds into the Globin domain. Thr13 carries the phosphothreonine modification. A phosphoserine mark is found at Ser45, Ser51, and Ser53. Lys60 is subject to N6-acetyllysine. Heme b is bound at residue His64. Lys83 carries the N6-acetyllysine modification. His93 contributes to the heme b binding site. Cys94 is subject to S-nitrosocysteine. A phosphoserine mark is found at Ser140, Ser143, and Ser144.

This sequence belongs to the globin family. As to quaternary structure, heterotetramer of two alpha chains and two gamma chains in fetal hemoglobin (Hb F). In terms of tissue distribution, red blood cells.

In terms of biological role, gamma chains make up the fetal hemoglobin F, in combination with alpha chains. This Pongo pygmaeus (Bornean orangutan) protein is Hemoglobin subunit gamma-2 (HBG2).